Here is a 135-residue protein sequence, read N- to C-terminus: U-myrmeciitoxin(01)-Mg7a (135 aa).

The N-terminal stretch at 1 to 21 is a signal peptide; the sequence is MKLSCLSLALAIILLLAIVHS. A propeptide spanning residues 22 to 72 is cleaved from the precursor; sequence PNMEVKALAGPEADAIGFADAFGEADAFGEADAFGEADAFGEADAFGEADA. The segment at 69–95 is disordered; the sequence is EADAKRSKSSSKTKPKKPKKPKKKIKI. The segment covering 75-93 has biased composition (basic residues); sequence SKSSSKTKPKKPKKPKKKI. An O-linked (GalNAc...) serine glycan is attached at serine 120. O-linked (GalNAc...) threonine glycosylation is found at threonine 129 and threonine 130.

Belongs to the formicidae venom precursor-01 superfamily. Glycosylation is critical to maintaining the aqueous solubility of this protein, but does not directly contribute to its activity. In terms of tissue distribution, expressed by the venom gland.

The protein localises to the secreted. Its subcellular location is the target cell membrane. Its function is as follows. Neurotoxin that triggers pain behavior and inflammation in mammals, and is paralytic and lethal to insects. Causes a time-dependent increase in cell leak current. May act by targeting membranes. The sequence is that of U-myrmeciitoxin(01)-Mg7a from Myrmecia gulosa (Red bulldog ant).